Here is an 867-residue protein sequence, read N- to C-terminus: Putative tyrosine-protein kinase F09A5.2 (867 aa).

The next 2 membrane-spanning stretches (helical) occupy residues 45–65 (VMKILSGFSLIIIVVFIFATS) and 355–375 (LLLIIGIPCISLTICCIAFFV). N395 and N423 each carry an N-linked (GlcNAc...) asparagine glycan. Positions 467–757 (VQEDHLLGNG…FNEMRGEITV (291 aa)) constitute a Protein kinase domain. Residue 473-481 (LGNGAFANV) coordinates ATP. N-linked (GlcNAc...) asparagine glycans are attached at residues N496 and N500. K516 provides a ligand contact to ATP. The N-linked (GlcNAc...) asparagine glycan is linked to N585. The Proton acceptor role is filled by D626. Disordered stretches follow at residues 782 to 821 (LTMQDSKETAPCSTPGGSQDMDEDGDYDSGSEGHSQGTCA) and 848 to 867 (SKSMRGKRRQSNSTVSTYQS). Residues 801–810 (DMDEDGDYDS) are compositionally biased toward acidic residues. Polar residues predominate over residues 858–867 (SNSTVSTYQS). N-linked (GlcNAc...) asparagine glycosylation is present at N859.

This sequence belongs to the protein kinase superfamily. Tyr protein kinase family.

It localises to the membrane. It carries out the reaction L-tyrosyl-[protein] + ATP = O-phospho-L-tyrosyl-[protein] + ADP + H(+). The chain is Putative tyrosine-protein kinase F09A5.2 from Caenorhabditis elegans.